Consider the following 397-residue polypeptide: Cell division protein DivIB (397 aa).

Residues 1 to 138 (MTTKDKGDQK…RIERIHLYRA (138 aa)) are Cytoplasmic-facing. The span at 24 to 37 (QEYLEKKSQEKASE) shows a compositional bias: basic and acidic residues. The interval 24–115 (QEYLEKKSQE…DRTEKFIGQA (92 aa)) is disordered. The span at 74 to 103 (ASDDDETNESEESEDVEEPEEENIEESSDV) shows a compositional bias: acidic residues. A helical membrane pass occupies residues 139 to 159 (LPVLVISSLLILLSLYFITPL). The POTRA domain maps to 160–231 (GSLKNLVVTG…ITFKIQVTEY (72 aa)). At 160-397 (GSLKNLVVTG…PSDVTDETNN (238 aa)) the chain is on the extracellular side. The segment at 360 to 397 (LVQKEEQDQEQEKEESSEETVPGETEAAPSDVTDETNN) is disordered. Acidic residues predominate over residues 366 to 377 (QDQEQEKEESSE).

Belongs to the FtsQ/DivIB family. DivIB subfamily.

Its subcellular location is the cell membrane. Functionally, cell division protein that may be involved in stabilizing or promoting the assembly of the division complex. The chain is Cell division protein DivIB from Streptococcus gordonii (strain Challis / ATCC 35105 / BCRC 15272 / CH1 / DL1 / V288).